A 487-amino-acid chain; its full sequence is Probable cobyric acid synthase (487 aa).

Positions leucine 246 to alanine 431 constitute a GATase cobBQ-type domain. Cysteine 325 functions as the Nucleophile in the catalytic mechanism. The active site involves histidine 423.

Belongs to the CobB/CobQ family. CobQ subfamily.

It functions in the pathway cofactor biosynthesis; adenosylcobalamin biosynthesis. Functionally, catalyzes amidations at positions B, D, E, and G on adenosylcobyrinic A,C-diamide. NH(2) groups are provided by glutamine, and one molecule of ATP is hydrogenolyzed for each amidation. The chain is Probable cobyric acid synthase from Methanosphaerula palustris (strain ATCC BAA-1556 / DSM 19958 / E1-9c).